The sequence spans 27 residues: Delta-conotoxin TsVIA (27 aa).

Disulfide bonds link cysteine 1-cysteine 17, cysteine 8-cysteine 21, and cysteine 16-cysteine 25.

The protein belongs to the conotoxin O1 superfamily. In terms of tissue distribution, expressed by the venom duct.

It localises to the secreted. Delta-conotoxins bind to site 6 of voltage-gated sodium channels (Nav) and inhibit the inactivation process. This toxin inhibits tetrodotoxin(TTX)-sensitive sodium channels. A test on mouse Nav1.6/SCN8A confirms this sensitivity. This chain is Delta-conotoxin TsVIA, found in Conus tessulatus (Tessellate cone).